Reading from the N-terminus, the 118-residue chain is MARVKRGVQANRRHKKILKRAKGYYGARSRVYRVAVQAVTKAGQYAYRDRRNKKRTFRRLWIARINAGARLNGLSYSRFINGLKKANIEIDRRVLADIAMHDAAAFTALTEKAKAALA.

Belongs to the bacterial ribosomal protein bL20 family.

Binds directly to 23S ribosomal RNA and is necessary for the in vitro assembly process of the 50S ribosomal subunit. It is not involved in the protein synthesizing functions of that subunit. This Psychrobacter sp. (strain PRwf-1) protein is Large ribosomal subunit protein bL20.